The chain runs to 377 residues: Succinyl-diaminopimelate desuccinylase (377 aa).

Residue histidine 66 participates in Zn(2+) binding. Aspartate 68 is an active-site residue. Aspartate 99 contributes to the Zn(2+) binding site. The Proton acceptor role is filled by glutamate 133. Zn(2+) is bound by residues glutamate 134, glutamate 162, and histidine 348.

The protein belongs to the peptidase M20A family. DapE subfamily. Homodimer. It depends on Zn(2+) as a cofactor. Requires Co(2+) as cofactor.

The catalysed reaction is N-succinyl-(2S,6S)-2,6-diaminopimelate + H2O = (2S,6S)-2,6-diaminopimelate + succinate. Its pathway is amino-acid biosynthesis; L-lysine biosynthesis via DAP pathway; LL-2,6-diaminopimelate from (S)-tetrahydrodipicolinate (succinylase route): step 3/3. In terms of biological role, catalyzes the hydrolysis of N-succinyl-L,L-diaminopimelic acid (SDAP), forming succinate and LL-2,6-diaminopimelate (DAP), an intermediate involved in the bacterial biosynthesis of lysine and meso-diaminopimelic acid, an essential component of bacterial cell walls. The polypeptide is Succinyl-diaminopimelate desuccinylase (Marinomonas sp. (strain MWYL1)).